The chain runs to 372 residues: N-methyl-L-tryptophan oxidase (372 aa).

Asp-4–His-34 lines the FAD pocket. Cys-308 bears the S-8alpha-FAD cysteine mark.

It belongs to the MSOX/MTOX family. MTOX subfamily. In terms of assembly, monomer. FAD is required as a cofactor.

It carries out the reaction N(alpha)-methyl-L-tryptophan + O2 + H2O = L-tryptophan + formaldehyde + H2O2. Functionally, catalyzes the oxidative demethylation of N-methyl-L-tryptophan. This is N-methyl-L-tryptophan oxidase from Escherichia coli O7:K1 (strain IAI39 / ExPEC).